Here is a 766-residue protein sequence, read N- to C-terminus: Serine/threonine-protein kinase tousled-like 1 (766 aa).

At M1 the chain carries N-acetylmethionine. The segment covering 1–19 (MSVQSSSGSLEGPPSWSQL) has biased composition (polar residues). Positions 1-197 (MSVQSSSGSL…SPSPTALAFG (197 aa)) are disordered. Positions 20–33 (STSPTPGSAAAARS) are enriched in low complexity. T38 carries the phosphothreonine modification. Residues 43–64 (RPREGAMDELHSLDPRRQELLE) are compositionally biased toward basic and acidic residues. S54, S77, and S80 each carry phosphoserine. Positions 68 to 85 (TGVASGSTGSTGSCSVGA) are enriched in low complexity. Positions 87–103 (ASTNNESSNHSFGSLGS) are enriched in polar residues. Residues 105–121 (SDKESETPEKKQSESSR) show a composition bias toward basic and acidic residues. Phosphoserine occurs at positions 134, 159, 174, and 176. Residues 170-192 (SPQNSHSHSTPSSSVRPNSPSPT) are compositionally biased toward low complexity. Residues 230-281 (QDLEKKEGRIDDLLRANCDLRRQIDEQQKLLEKYKERLNKCISMSKKLLIEK) adopt a coiled-coil conformation. The segment at 346 to 383 (LAKRKPPTANNSQAPSTNSEPKQRKNKAVNGAENDPFV) is disordered. Residues 353-365 (TANNSQAPSTNSE) show a composition bias toward polar residues. The stretch at 397 to 445 (HEQEEIFKLRLGHLKKEEAEIQAELERLERVRNLHIRELKRINNEDNSQ) forms a coiled coil. Residues 456–734 (YLLLHLLGRG…VHQLANDPYL (279 aa)) form the Protein kinase domain. Residues 462-470 (LGRGGFSEV) and K485 contribute to the ATP site. D586 acts as the Proton acceptor in catalysis. S743 bears the Phosphoserine mark.

The protein belongs to the protein kinase superfamily. Ser/Thr protein kinase family. Heterodimer with TLK2. Mg(2+) is required as a cofactor. Widely expressed. Present in fetal placenta, liver, kidney and pancreas but not heart or skeletal muscle. Also found in adult cell lines. Isoform 3 is ubiquitously expressed in all tissues examined.

Its subcellular location is the nucleus. It catalyses the reaction L-seryl-[protein] + ATP = O-phospho-L-seryl-[protein] + ADP + H(+). It carries out the reaction L-threonyl-[protein] + ATP = O-phospho-L-threonyl-[protein] + ADP + H(+). Its activity is regulated as follows. Cell-cycle regulated, maximal activity in S-phase. Inactivated by phosphorylation at Ser-743, potentially by CHEK1. In terms of biological role, rapidly and transiently inhibited by phosphorylation following the generation of DNA double-stranded breaks during S-phase. This is cell cycle checkpoint and ATM-pathway dependent and appears to regulate processes involved in chromatin assembly. Isoform 3 phosphorylates and enhances the stability of the t-SNARE SNAP23, augmenting its assembly with syntaxin. Isoform 3 protects the cells from the ionizing radiation by facilitating the repair of DSBs. In vitro, phosphorylates histone H3 at 'Ser-10'. The chain is Serine/threonine-protein kinase tousled-like 1 (TLK1) from Homo sapiens (Human).